The chain runs to 291 residues: 4-hydroxy-tetrahydrodipicolinate synthase (291 aa).

A pyruvate-binding site is contributed by threonine 45. Tyrosine 133 acts as the Proton donor/acceptor in catalysis. Lysine 161 acts as the Schiff-base intermediate with substrate in catalysis. Position 203 (isoleucine 203) interacts with pyruvate.

This sequence belongs to the DapA family. In terms of assembly, homotetramer; dimer of dimers.

The protein localises to the cytoplasm. The catalysed reaction is L-aspartate 4-semialdehyde + pyruvate = (2S,4S)-4-hydroxy-2,3,4,5-tetrahydrodipicolinate + H2O + H(+). It functions in the pathway amino-acid biosynthesis; L-lysine biosynthesis via DAP pathway; (S)-tetrahydrodipicolinate from L-aspartate: step 3/4. In terms of biological role, catalyzes the condensation of (S)-aspartate-beta-semialdehyde [(S)-ASA] and pyruvate to 4-hydroxy-tetrahydrodipicolinate (HTPA). This chain is 4-hydroxy-tetrahydrodipicolinate synthase, found in Methylococcus capsulatus (strain ATCC 33009 / NCIMB 11132 / Bath).